The following is a 634-amino-acid chain: MDLWQLLLTLAVAGSSDAFSGSEATPAFFVRASQSLQILYPGLETNSSGNLKFTKCRSPELETFSCHWTDGANHSLQSPGSVQMFYIRRDIQEWKECPDYVSAGENSCYFNSSYTSVWTPYCIKLTSNGGIVDHKCFSVEDIVQPDPPVGLNWTLLNISLTEIHADILVKWEPPPNTDVKMGWIILEYELHYKELNETQWKMMDPLLVTSVPMYSLRLDKEYEVRVRTRQRNTEKYGKFSEVLLITFPQMNPSACEEDFQFPWFLIIIFGILGLTVTLFLLIFSKQQRIKMLILPPVPVPKIKGIDPDLLKEGKLEEVNTILAIHDNYKHEFYNDDSWVEFIELDIDDPDEKTEGSDTDRLLSNDHEKSLSIFGAKDDDSGRTSCYEPDILETDFHVSDMCDGTSEVAQPQRLKGEADILCLDQKNQNNSPSNDAAPASQQPSVILVEENKPRPLPIGGTESTHQAVHTQLSNPSSLANIDFYAQVSDITPAGNVVLSPGQKNKTGNPQCDTHPEVVTPSQADFIVDSAYFCEVDAKKYIALAPDVEAESHIEPSFNQEDIYITTESLTTTAGRSGTAENVPSSEIPVPDYTSIHIVQSPQGLVLNATALPLPDKEFLSSCGYVSTDQLNKIMP.

Positions 1–18 (MDLWQLLLTLAVAGSSDA) are cleaved as a signal peptide. Over 19 to 260 (FSGSEATPAF…NPSACEEDFQ (242 aa)) the chain is Extracellular. N-linked (GlcNAc...) asparagine glycosylation occurs at asparagine 46. Cysteine 56 and cysteine 66 are oxidised to a cystine. A glycan (N-linked (GlcNAc...) asparagine) is linked at asparagine 73. Cysteine 97 and cysteine 108 are oxidised to a cystine. Asparagine 111 is a glycosylation site (N-linked (GlcNAc...) asparagine). A disulfide bridge connects residues cysteine 122 and cysteine 136. The Fibronectin type-III domain maps to 147 to 250 (PPVGLNWTLL…EVLLITFPQM (104 aa)). N-linked (GlcNAc...) asparagine glycans are attached at residues asparagine 152, asparagine 157, and asparagine 196. The WSXWS motif motif lies at 236–240 (YGKFS). Residues 261–284 (FPWFLIIIFGILGLTVTLFLLIFS) traverse the membrane as a helical segment. The Cytoplasmic segment spans residues 285–634 (KQQRIKMLIL…STDQLNKIMP (350 aa)). Residues 290 to 375 (KMLILPPVPV…HEKSLSIFGA (86 aa)) form a required for JAK2 binding region. The Box 1 motif motif lies at 293–301 (ILPPVPVPK). Positions 336–345 (DSWVEFIELD) match the UbE motif motif. Residue serine 337 is modified to Phosphoserine. The segment at 451–471 (KPRPLPIGGTESTHQAVHTQL) is disordered. The segment covering 460–471 (TESTHQAVHTQL) has biased composition (polar residues). Residues tyrosine 483 and tyrosine 591 each carry the phosphotyrosine modification.

It belongs to the type I cytokine receptor family. Type 1 subfamily. As to quaternary structure, on growth hormone (GH) binding, forms homodimers and binds JAK2 via a box 1-containing domain. In terms of processing, the soluble form (GHBP) is produced by phorbol ester-promoted proteolytic cleavage at the cell surface (shedding) by ADAM17/TACE. Shedding is inhibited by growth hormone (GH) binding to the receptor probably due to a conformational change in GHR rendering the receptor inaccessible to ADAM17. On GH binding, phosphorylated on tyrosine residues in the cytoplasmic domain by JAK2. Post-translationally, ubiquitinated by the ECS(SOCS2) complex following ligand-binding and phosphorylation by JAK2, leading to its degradation by the proteasome. Regulation by the ECS(SOCS2) complex acts as a negative feedback loop of growth hormone receptor signaling. Ubiquitination is not sufficient for GHR internalization.

It localises to the cell membrane. The protein localises to the secreted. In terms of biological role, receptor for pituitary gland growth hormone (GH1) involved in regulating postnatal body growth. On ligand binding, couples to the JAK2/STAT5 pathway. Functionally, the soluble form (GHBP) acts as a reservoir of growth hormone in plasma and may be a modulator/inhibitor of GH signaling. This Ovis aries (Sheep) protein is Growth hormone receptor (GHR).